A 212-amino-acid chain; its full sequence is Imidazole glycerol phosphate synthase subunit HisH (212 aa).

Residues 4–210 enclose the Glutamine amidotransferase type-1 domain; that stretch reads NIGIIDYGMG…LKWLHEKNSD (207 aa). Cysteine 82 serves as the catalytic Nucleophile. Active-site residues include histidine 185 and glutamate 187.

As to quaternary structure, heterodimer of HisH and HisF.

The protein localises to the cytoplasm. It carries out the reaction 5-[(5-phospho-1-deoxy-D-ribulos-1-ylimino)methylamino]-1-(5-phospho-beta-D-ribosyl)imidazole-4-carboxamide + L-glutamine = D-erythro-1-(imidazol-4-yl)glycerol 3-phosphate + 5-amino-1-(5-phospho-beta-D-ribosyl)imidazole-4-carboxamide + L-glutamate + H(+). The catalysed reaction is L-glutamine + H2O = L-glutamate + NH4(+). It participates in amino-acid biosynthesis; L-histidine biosynthesis; L-histidine from 5-phospho-alpha-D-ribose 1-diphosphate: step 5/9. IGPS catalyzes the conversion of PRFAR and glutamine to IGP, AICAR and glutamate. The HisH subunit catalyzes the hydrolysis of glutamine to glutamate and ammonia as part of the synthesis of IGP and AICAR. The resulting ammonia molecule is channeled to the active site of HisF. This Prochlorococcus marinus (strain MIT 9211) protein is Imidazole glycerol phosphate synthase subunit HisH.